The chain runs to 152 residues: Deoxyuridine 5'-triphosphate nucleotidohydrolase (152 aa).

Residues 71–73 (RSG), Asn-84, 88–90 (LID), and Met-98 contribute to the substrate site.

This sequence belongs to the dUTPase family. It depends on Mg(2+) as a cofactor.

It carries out the reaction dUTP + H2O = dUMP + diphosphate + H(+). It functions in the pathway pyrimidine metabolism; dUMP biosynthesis; dUMP from dCTP (dUTP route): step 2/2. This enzyme is involved in nucleotide metabolism: it produces dUMP, the immediate precursor of thymidine nucleotides and it decreases the intracellular concentration of dUTP so that uracil cannot be incorporated into DNA. The protein is Deoxyuridine 5'-triphosphate nucleotidohydrolase of Shewanella halifaxensis (strain HAW-EB4).